A 445-amino-acid polypeptide reads, in one-letter code: Argininosuccinate synthase (445 aa).

ATP contacts are provided by residues 17-25 (AFSGGLDTS) and Ala-43. Tyr-99 provides a ligand contact to L-citrulline. Residues Gly-129 and Thr-131 each contribute to the ATP site. 3 residues coordinate L-aspartate: Thr-131, Asn-135, and Asp-136. Asn-135 lines the L-citrulline pocket. Asp-136 lines the ATP pocket. 2 residues coordinate L-citrulline: Arg-139 and Ser-192. An ATP-binding site is contributed by Asp-194. Residues Thr-201, Glu-203, and Glu-280 each coordinate L-citrulline.

The protein belongs to the argininosuccinate synthase family. Type 2 subfamily. In terms of assembly, homotetramer.

Its subcellular location is the cytoplasm. The catalysed reaction is L-citrulline + L-aspartate + ATP = 2-(N(omega)-L-arginino)succinate + AMP + diphosphate + H(+). It participates in amino-acid biosynthesis; L-arginine biosynthesis; L-arginine from L-ornithine and carbamoyl phosphate: step 2/3. The protein is Argininosuccinate synthase (argG) of Bradyrhizobium diazoefficiens (strain JCM 10833 / BCRC 13528 / IAM 13628 / NBRC 14792 / USDA 110).